The chain runs to 142 residues: Peptidyl-prolyl cis-trans isomerase FKBP2 (142 aa).

The signal sequence occupies residues 1 to 21; the sequence is MRLSWFRVLTVLSICLSAVAT. Positions 49–137 constitute a PPIase FKBP-type domain; it reads GDVLHMHYTG…VFEVELLKIE (89 aa). The Prevents secretion from ER signature appears at 139 to 142; sequence RTEL.

This sequence belongs to the FKBP-type PPIase family. FKBP2 subfamily. Interacts with ARFGEF1/BIG1 and the C-terminal of EPB41L2. As to expression, T-cells and thymus.

The protein localises to the endoplasmic reticulum membrane. The catalysed reaction is [protein]-peptidylproline (omega=180) = [protein]-peptidylproline (omega=0). Its activity is regulated as follows. Inhibited by both FK506 and rapamycin. Its function is as follows. PPIases accelerate the folding of proteins. It catalyzes the cis-trans isomerization of proline imidic peptide bonds in oligopeptides. This Homo sapiens (Human) protein is Peptidyl-prolyl cis-trans isomerase FKBP2 (FKBP2).